We begin with the raw amino-acid sequence, 111 residues long: Phosphoribosyl-ATP pyrophosphatase (111 aa).

It belongs to the PRA-PH family.

The protein localises to the cytoplasm. It catalyses the reaction 1-(5-phospho-beta-D-ribosyl)-ATP + H2O = 1-(5-phospho-beta-D-ribosyl)-5'-AMP + diphosphate + H(+). The protein operates within amino-acid biosynthesis; L-histidine biosynthesis; L-histidine from 5-phospho-alpha-D-ribose 1-diphosphate: step 2/9. This chain is Phosphoribosyl-ATP pyrophosphatase, found in Azotobacter vinelandii (strain DJ / ATCC BAA-1303).